We begin with the raw amino-acid sequence, 858 residues long: DNA mismatch repair protein MutS (858 aa).

Position 609-616 (609-616 (GPNMSGKS)) interacts with ATP.

Belongs to the DNA mismatch repair MutS family.

In terms of biological role, this protein is involved in the repair of mismatches in DNA. It is possible that it carries out the mismatch recognition step. This protein has a weak ATPase activity. The protein is DNA mismatch repair protein MutS of Enterococcus faecalis (strain ATCC 700802 / V583).